The primary structure comprises 97 residues: Acylphosphatase (97 aa).

One can recognise an Acylphosphatase-like domain in the interval 3-97 (KVKMIVSGRV…PDFTDFNIKY (95 aa)). Active-site residues include Arg18 and Asn36.

It belongs to the acylphosphatase family.

It catalyses the reaction an acyl phosphate + H2O = a carboxylate + phosphate + H(+). The polypeptide is Acylphosphatase (acyP) (Lactococcus lactis subsp. lactis (strain IL1403) (Streptococcus lactis)).